The primary structure comprises 357 residues: Inositol-tetrakisphosphate 1-kinase 3 (357 aa).

Residues K56 and K98 each contribute to the 1D-myo-inositol 1,3,4-trisphosphate site. Residues R133 and K183 each coordinate ATP. H190 and K222 together coordinate 1D-myo-inositol 1,3,4-trisphosphate. ATP contacts are provided by residues 211 to 222 (QEFVNHGGVLFK), S237, and S262. Mg(2+) is bound by residues D302, D317, and N319. N319 is a binding site for 1D-myo-inositol 1,3,4-trisphosphate.

It belongs to the ITPK1 family. Monomer. Requires Mg(2+) as cofactor.

The catalysed reaction is 1D-myo-inositol 3,4,5,6-tetrakisphosphate + ATP = 1D-myo-inositol 1,3,4,5,6-pentakisphosphate + ADP + H(+). The enzyme catalyses 1D-myo-inositol 1,3,4-trisphosphate + ATP = 1D-myo-inositol 1,3,4,5-tetrakisphosphate + ADP + H(+). It catalyses the reaction 1D-myo-inositol 1,3,4-trisphosphate + ATP = 1D-myo-inositol 1,3,4,6-tetrakisphosphate + ADP + H(+). Kinase that can phosphorylate various inositol polyphosphate such as Ins(3,4,5,6)P4 or Ins(1,3,4)P3 and participates in phytic acid biosynthesis in developing seeds. Phytic acid is the primary storage form of phosphorus in cereal grains and other plant seeds. The polypeptide is Inositol-tetrakisphosphate 1-kinase 3 (ITPK3) (Oryza sativa subsp. indica (Rice)).